The chain runs to 603 residues: Probable NOT transcription complex subunit VIP2 (603 aa).

2 stretches are compositionally biased toward polar residues: residues 1-28 (MQGT…NNLS) and 36-70 (NLPS…PGYS). Disordered stretches follow at residues 1–70 (MQGT…PGYS), 212–242 (NDGS…LGSL), 306–335 (AGFN…GGVS), and 355–377 (SSHS…PLNS). The span at 312–335 (GTYSSNRPQQQLQHAPSVSSGGVS) shows a compositional bias: polar residues.

It belongs to the CNOT2/3/5 family. As to quaternary structure, binds to VIP1. Interacts with Agrobacterium tumefaciens VirE2. Forms a complex made of Agrobacterium VirE2, VIP1, VIP2 and single-stranded DNA (ssDNA).

Its subcellular location is the nucleus. Functionally, transcriptional regulator required for Agrobacterium-mediated stable genetic transformation by T-DNA integration in host genome, but not for T-DNA transient expression. The sequence is that of Probable NOT transcription complex subunit VIP2 (VIP2) from Nicotiana benthamiana.